Reading from the N-terminus, the 215-residue chain is MRSIANKKLVIATHNIGKLQEITTLVAPFGLTIQSAKELGLPEPKETGTTFEENAYIKAFAAAKNTGLPALSDDSGLEVDALNGAPGVYTADLALQSDGTRDFLKAMQKIEEKLQKIGAHKKSQRKCRFISVICIAWPDAHADYFHGRVEGSFIWPPRGDKGFGFDPVFLPDGYKNTFGEMTTEQKHGWKLNDQTPLSHRACAFKLLAENLLKLS.

13–18 lines the substrate pocket; the sequence is THNIGK. Asp74 acts as the Proton acceptor in catalysis. Mg(2+) is bound at residue Asp74. Residues Ser75, 163–166, Lys186, and 199–200 contribute to the substrate site; these read FGFD and HR.

It belongs to the HAM1 NTPase family. As to quaternary structure, homodimer. It depends on Mg(2+) as a cofactor.

The enzyme catalyses XTP + H2O = XMP + diphosphate + H(+). The catalysed reaction is dITP + H2O = dIMP + diphosphate + H(+). It catalyses the reaction ITP + H2O = IMP + diphosphate + H(+). Functionally, pyrophosphatase that catalyzes the hydrolysis of nucleoside triphosphates to their monophosphate derivatives, with a high preference for the non-canonical purine nucleotides XTP (xanthosine triphosphate), dITP (deoxyinosine triphosphate) and ITP. Seems to function as a house-cleaning enzyme that removes non-canonical purine nucleotides from the nucleotide pool, thus preventing their incorporation into DNA/RNA and avoiding chromosomal lesions. The protein is dITP/XTP pyrophosphatase of Bartonella henselae (strain ATCC 49882 / DSM 28221 / CCUG 30454 / Houston 1) (Rochalimaea henselae).